The chain runs to 350 residues: MSESLNYYVTAYYRFTKLADLPAIQKALEDKAEELNVKGLVILGDEGYNSTCAASSIESFEAWKTFIREYFNSPDQFFKDSESTKSPFRRFKVKVRNEIVTTGIPGVMPPEGVNHHLSPTEWNKVMKEETDYVMIDTRNWYEYKIGTFKGALNPNIEKFTEFPQYIEAQGIPKDKKMLIFCTGGIRCEKGILELQDKGYNNVFQLDGGILNYMKEYPNDQFEGECFVFDHRVAVDQNLQPTTKFGLCPHCGQPSTIKIECKRCDAHELICEDCIKVEYAKDTCSKNCAYQLEKHPARKGQKQLVPFEIEKMKAEGKDTGSIPQIRVTRTKYISLNKNGEAETRSTKETAE.

The 94-residue stretch at 128 to 221 (EETDYVMIDT…YMKEYPNDQF (94 aa)) folds into the Rhodanese domain. Catalysis depends on cysteine 181, which acts as the Cysteine persulfide intermediate.

This sequence belongs to the TrhO family.

It catalyses the reaction uridine(34) in tRNA + AH2 + O2 = 5-hydroxyuridine(34) in tRNA + A + H2O. Its function is as follows. Catalyzes oxygen-dependent 5-hydroxyuridine (ho5U) modification at position 34 in tRNAs. This is tRNA uridine(34) hydroxylase from Bdellovibrio bacteriovorus (strain ATCC 15356 / DSM 50701 / NCIMB 9529 / HD100).